The chain runs to 540 residues: BTB/POZ domain-containing protein 6-A (540 aa).

The BTB domain occupies 138–208 (ADVHFIVGPP…MYSDEIELAP (71 aa)).

Interacts with cul3. Interacts (via BTB domain) with zbtb16/plzf. In terms of tissue distribution, expressed in the developing central nervous system.

Its subcellular location is the cytoplasm. It is found in the nucleus. Adapter protein for the cul3 E3 ubiquitin-protein ligase complex. Promotes the export of zbtb16/plzf from the nucleus to the cytoplasm and targets zbtb16/plzf for ubiquitination and degradation. Up-regulates neurog1 expression and antagonizes zbtb16/plzf, to promote neurogenesis. This chain is BTB/POZ domain-containing protein 6-A (btbd6a), found in Danio rerio (Zebrafish).